The following is a 295-amino-acid chain: Glutenin, low molecular weight subunit PTDUCD1 (295 aa).

An N-terminal signal peptide occupies residues 1 to 20 (MKTFLVFALLAVVATSTIAQ). A disordered region spans residues 30 to 61 (ERPWQEQPLPPQHTLFPQQQPFPQQQQPPFSQ). Residues 41 to 61 (QHTLFPQQQPFPQQQQPPFSQ) show a composition bias toward low complexity.

This sequence belongs to the gliadin/glutenin family. Disulfide-bridge linked aggregates.

Its function is as follows. Glutenins are high-molecular weight seed storage proteins of wheat endosperm. Thought to be responsible for the visco-elastic property of wheat dough. This Triticum aestivum (Wheat) protein is Glutenin, low molecular weight subunit PTDUCD1.